The sequence spans 193 residues: Xanthine phosphoribosyltransferase (193 aa).

Leu-20 and Asn-27 together coordinate xanthine. 5-phospho-alpha-D-ribose 1-diphosphate is bound at residue 128 to 132 (ANGDA). Xanthine is bound at residue Lys-156.

This sequence belongs to the purine/pyrimidine phosphoribosyltransferase family. Xpt subfamily. In terms of assembly, homodimer.

Its subcellular location is the cytoplasm. The catalysed reaction is XMP + diphosphate = xanthine + 5-phospho-alpha-D-ribose 1-diphosphate. It functions in the pathway purine metabolism; XMP biosynthesis via salvage pathway; XMP from xanthine: step 1/1. In terms of biological role, converts the preformed base xanthine, a product of nucleic acid breakdown, to xanthosine 5'-monophosphate (XMP), so it can be reused for RNA or DNA synthesis. The protein is Xanthine phosphoribosyltransferase of Staphylococcus saprophyticus subsp. saprophyticus (strain ATCC 15305 / DSM 20229 / NCIMB 8711 / NCTC 7292 / S-41).